A 425-amino-acid chain; its full sequence is Probable mannosyltransferase KTR2 (425 aa).

Residues Met-1 to Lys-13 lie on the Cytoplasmic side of the membrane. The chain crosses the membrane as a helical; Signal-anchor for type II membrane protein span at residues Leu-14–Val-33. Residues Pro-34–Gln-89 are stem region. Residues Pro-34–Ser-425 are Lumenal-facing. N-linked (GlcNAc...) asparagine glycans are attached at residues Asn-65, Asn-81, Asn-92, and Asn-167. The interval Arg-90–Ser-425 is catalytic. Glu-313 (nucleophile) is an active-site residue.

It belongs to the glycosyltransferase 15 family.

It localises to the golgi apparatus membrane. The protein operates within protein modification; protein glycosylation. Its function is as follows. Involved in N-linked glycosylation. Transfers an alpha-D-mannosyl residue from GDP-mannose into lipid-linked oligosaccharide, forming an alpha-(1-&gt;2)-D-mannosyl-D-mannose linkage. The sequence is that of Probable mannosyltransferase KTR2 (KTR2) from Saccharomyces cerevisiae (strain ATCC 204508 / S288c) (Baker's yeast).